Reading from the N-terminus, the 188-residue chain is Methylated-DNA--protein-cysteine methyltransferase (188 aa).

3 residues coordinate DNA: tyrosine 120, glycine 121, and arginine 134. Cysteine 151 serves as the catalytic Nucleophile; methyl group acceptor. Serine 157 provides a ligand contact to DNA.

The protein belongs to the MGMT family.

It is found in the nucleus. The catalysed reaction is a 6-O-methyl-2'-deoxyguanosine in DNA + L-cysteinyl-[protein] = S-methyl-L-cysteinyl-[protein] + a 2'-deoxyguanosine in DNA. It carries out the reaction a 4-O-methyl-thymidine in DNA + L-cysteinyl-[protein] = a thymidine in DNA + S-methyl-L-cysteinyl-[protein]. Its function is as follows. Involved in the cellular defense against the biological effects of O6-methylguanine (O6-MeG) and O4-methylthymine (O4-MeT) in DNA. Repairs the methylated nucleobase in DNA by stoichiometrically transferring the methyl group to a cysteine residue in the enzyme. This is a suicide reaction: the enzyme is irreversibly inactivated. Prefers double-stranded DNA over single-stranded DNA as substrate. In Saccharomyces cerevisiae (strain ATCC 204508 / S288c) (Baker's yeast), this protein is Methylated-DNA--protein-cysteine methyltransferase (MGT1).